We begin with the raw amino-acid sequence, 729 residues long: Solute carrier family 15 member 2 (729 aa).

The tract at residues 1-34 is disordered; the sequence is MNPFQQNESKETLFSPVSTEETPPRLSSPAKKTP. Residues 1 to 57 are Cytoplasmic-facing; sequence MNPFQQNESKETLFSPVSTEETPPRLSSPAKKTPPKICGSNYPLSIAFIVVNEFCER. The residue at position 9 (serine 9) is a Phosphoserine. Threonine 12 carries the phosphothreonine modification. Serine 28 carries the post-translational modification Phosphoserine. The helical transmembrane segment at 58-78 threads the bilayer; the sequence is FSYYGMKAVLTLYFLYFLHWN. The Extracellular portion of the chain corresponds to 79–87; it reads EDTSTSVYH. Residues 88–108 traverse the membrane as a helical segment; it reads AFSSLCYFTPILGAAIADSWL. Residues 109–113 are Cytoplasmic-facing; that stretch reads GKFKT. A helical transmembrane segment spans residues 114–134; it reads IIYLSLVNVLGHVIKSLSAFP. At 135-139 the chain is on the extracellular side; it reads ILGGK. The helical transmembrane segment at 140-160 threads the bilayer; it reads VVHTVLSLVGLCLIALGTGGI. Over 161-183 the chain is Cytoplasmic; sequence KPCVAAFGGDQFEEKHAEERTRY. Residues 184–204 traverse the membrane as a helical segment; the sequence is FSGFYLAINAGSLISTFITPM. The Extracellular segment spans residues 205-217; that stretch reads LRGDVQCFGEDCY. The helical transmembrane segment at 218 to 238 threads the bilayer; it reads ALAFGVPGLLMVIALVVFAMG. Residues 239 to 295 are Cytoplasmic-facing; it reads SKMYKKPPPEGNIVAQVVKCIWFAISNRFKNRSEDIPKRQHWLDWAAEKYPKQLIMD. The chain crosses the membrane as a helical span at residues 296–316; that stretch reads VKTLTRVLFLYIPLPMFWALL. The Extracellular portion of the chain corresponds to 317–343; the sequence is DQQGSRWTLQATKMNGNLGFFVLQPDQ. Residues 344–364 form a helical membrane-spanning segment; that stretch reads MQVLNPLLVLIFIPLFDLVIY. Residues 365–380 lie on the Cytoplasmic side of the membrane; the sequence is RLISKCGINFTSLRKM. The helical transmembrane segment at 381–401 threads the bilayer; that stretch reads AVGMVLACLAFAAAATVEIKI. The Extracellular segment spans residues 402–611; that stretch reads NEMAPPQPGS…PANKVSIAWQ (210 aa). Residues 402–611 are extracellular domain (ECD); that stretch reads NEMAPPQPGS…PANKVSIAWQ (210 aa). N-linked (GlcNAc...) asparagine glycans are attached at residues asparagine 435, asparagine 472, asparagine 508, asparagine 528, and asparagine 587. The chain crosses the membrane as a helical span at residues 612–632; it reads LPQYALVTAGEVMFSVTGLEF. The Cytoplasmic segment spans residues 633–643; it reads SYSQAPSSMKS. A helical transmembrane segment spans residues 644-664; sequence VLQAAWLLTVAIGNIIVLVVA. The Extracellular segment spans residues 665-674; that stretch reads QFSGLVQWAE. A helical membrane pass occupies residues 675-695; sequence FVLFSCLLLVVCLIFSIMGYY. Residues 696–729 are Cytoplasmic-facing; it reads YIPIKSEDIQGPEDKQIPHMQGNMINLETKKTKL.

Belongs to the major facilitator superfamily. Proton-dependent oligopeptide transporter (POT/PTR) (TC 2.A.17) family. As to quaternary structure, interacts (via extracellular domain region) with trypsin. In terms of tissue distribution, strongly expressed in kidney. Also detected in brain, lung, liver and heart.

It is found in the apical cell membrane. The protein localises to the cytoplasmic vesicle. Its subcellular location is the phagosome membrane. The protein resides in the cell membrane. The enzyme catalyses a dipeptide(out) + 2 H(+)(out) = a dipeptide(in) + 2 H(+)(in). It catalyses the reaction N-acetyl-D-muramoyl-L-alanyl-D-isoglutamine(out) + 3 H(+)(out) = N-acetyl-D-muramoyl-L-alanyl-D-isoglutamine(in) + 3 H(+)(in). The catalysed reaction is glycyl-L-leucine(out) + 2 H(+)(out) = glycyl-L-leucine(in) + 2 H(+)(in). It carries out the reaction glycyl-L-lysine(out) + 2 H(+)(out) = glycyl-L-lysine(in) + 2 H(+)(in). The enzyme catalyses glycyl-L-glutamate(out) + 3 H(+)(out) = glycyl-L-glutamate(in) + 3 H(+)(in). It catalyses the reaction L-alanyl-L-alanine(out) + 2 H(+)(out) = L-alanyl-L-alanine(in) + 2 H(+)(in). The catalysed reaction is an L-amino acid tripeptide(out) + 2 H(+)(out) = an L-amino acid tripeptide(in) + 2 H(+)(in). It carries out the reaction carnosine(out) + 2 H(+)(out) = carnosine(in) + 2 H(+)(in). Functionally, proton-coupled amino-acid transporter that transports oligopeptides of 2 to 4 amino acids with a preference for dipeptides. Transports neutral and anionic dipeptides with a proton to peptide stoichiometry of 2:1 or 3:1. In kidney, involved in the absorption of circulating di- and tripeptides from the glomerular filtrate. Can also transport beta-lactam antibiotics, such as the aminocephalosporin cefadroxil, and other antiviral and anticancer drugs. Transports the dipeptide-like aminopeptidase inhibitor bestatin. Also able to transport carnosine. Involved in innate immunity by promoting the detection of microbial pathogens by NOD-like receptors (NLRs). Mediates transport of bacterial peptidoglycans across the plasma membrane or, in macrophages, the phagosome membrane: catalyzes the transport of certain bacterial peptidoglycans, such as muramyl dipeptide (MDP), the NOD2 ligand. The polypeptide is Solute carrier family 15 member 2 (Oryctolagus cuniculus (Rabbit)).